The primary structure comprises 227 residues: Cytochrome c oxidase subunit 2 (227 aa).

Residues 1–14 (MAYPLQLGFQDAVS) lie on the Mitochondrial intermembrane side of the membrane. Residues 15 to 45 (PIMEELLYFHDHTLMIVFLISSLVLYIITLM) form a helical membrane-spanning segment. Residues 46-59 (LTTKLTHTNTMNAQ) lie on the Mitochondrial matrix side of the membrane. A helical transmembrane segment spans residues 60–87 (EVETVWTILPAIILILIALPSLRILYMM). At 88–227 (DEINNPSLTV…TFEKWTASLL (140 aa)) the chain is on the mitochondrial intermembrane side. Residues H161, C196, E198, C200, H204, and M207 each coordinate Cu cation. E198 contacts Mg(2+).

It belongs to the cytochrome c oxidase subunit 2 family. As to quaternary structure, component of the cytochrome c oxidase (complex IV, CIV), a multisubunit enzyme composed of 14 subunits. The complex is composed of a catalytic core of 3 subunits MT-CO1, MT-CO2 and MT-CO3, encoded in the mitochondrial DNA, and 11 supernumerary subunits COX4I, COX5A, COX5B, COX6A, COX6B, COX6C, COX7A, COX7B, COX7C, COX8 and NDUFA4, which are encoded in the nuclear genome. The complex exists as a monomer or a dimer and forms supercomplexes (SCs) in the inner mitochondrial membrane with NADH-ubiquinone oxidoreductase (complex I, CI) and ubiquinol-cytochrome c oxidoreductase (cytochrome b-c1 complex, complex III, CIII), resulting in different assemblies (supercomplex SCI(1)III(2)IV(1) and megacomplex MCI(2)III(2)IV(2)). Found in a complex with TMEM177, COA6, COX18, COX20, SCO1 and SCO2. Interacts with TMEM177 in a COX20-dependent manner. Interacts with COX20. Interacts with COX16. Requires Cu cation as cofactor.

The protein localises to the mitochondrion inner membrane. It catalyses the reaction 4 Fe(II)-[cytochrome c] + O2 + 8 H(+)(in) = 4 Fe(III)-[cytochrome c] + 2 H2O + 4 H(+)(out). Functionally, component of the cytochrome c oxidase, the last enzyme in the mitochondrial electron transport chain which drives oxidative phosphorylation. The respiratory chain contains 3 multisubunit complexes succinate dehydrogenase (complex II, CII), ubiquinol-cytochrome c oxidoreductase (cytochrome b-c1 complex, complex III, CIII) and cytochrome c oxidase (complex IV, CIV), that cooperate to transfer electrons derived from NADH and succinate to molecular oxygen, creating an electrochemical gradient over the inner membrane that drives transmembrane transport and the ATP synthase. Cytochrome c oxidase is the component of the respiratory chain that catalyzes the reduction of oxygen to water. Electrons originating from reduced cytochrome c in the intermembrane space (IMS) are transferred via the dinuclear copper A center (CU(A)) of subunit 2 and heme A of subunit 1 to the active site in subunit 1, a binuclear center (BNC) formed by heme A3 and copper B (CU(B)). The BNC reduces molecular oxygen to 2 water molecules using 4 electrons from cytochrome c in the IMS and 4 protons from the mitochondrial matrix. This is Cytochrome c oxidase subunit 2 (MT-CO2) from Hippopotamus amphibius (Hippopotamus).